Consider the following 920-residue polypeptide: Anillin-related medial ring protein mid1 (920 aa).

A disordered region spans residues 1 to 452 (MKEQEFSYRE…LSSEDLRHPS (452 aa)). Serine 15 and serine 24 each carry phosphoserine. At threonine 34 the chain carries Phosphothreonine. A phosphoserine mark is found at serine 46 and serine 62. Positions 69–81 (LNVATDLLESLDL) match the Nuclear export sequence (NES) 1 motif. Serine 95 is subject to Phosphoserine. A compositionally biased stretch (polar residues) spans 461–481 (RTYSNYCENEPNKSSQSLVSS). The residue at position 531 (serine 531) is a Phosphoserine. The interval 538-561 (DLPSQDKSTSYEVPNGTENQSPRP) is disordered. Positions 542–561 (QDKSTSYEVPNGTENQSPRP) are enriched in polar residues. The cryptic lipid-binding C2 domain stretch occupies residues 551-920 (PNGTENQSPR…WLQEYVNFMA (370 aa)). Residues 681 to 710 (RKFFDKLFNRRKKRKLNKAAAVENSKAKKS) carry the Nuclear localization sequence (NLS) motif. A Nuclear export sequence (NES) 2 motif is present at residues 763-773 (LGNLTLTCLYI). Residues 802–901 (LYNEGYLYRL…WLQVMNSRSF (100 aa)) form the PH domain.

In terms of assembly, homodimer. Interacts with blt1 and cdr2. Interacts with gef2. Interacts with plo1 and rng2. Interacts with fhk2 and sep1. Interacts with clp1. Post-translationally, phosphorylated. At the onset of mitosis, becomes hyperphosphorylated, leaves the nucleus, and forms a medial ring. Phosphorylation by plo1 and other kinases may contribute to solubilizing mid1 for export from the nucleus. Phosphorylation by sid2 drives removal from the cortex at the actomyosin contractile ring constriction onset.

The protein resides in the nucleus. The protein localises to the cytoplasm. Its subcellular location is the cell cortex. It is found in the cytoskeleton. Scaffold protein that anchors the contractile ring (CR) at the cell equator during cytokinesis. At the onset of mitosis, membrane-bound oligomers of mid1 assemble recruitment platforms for cytokinetic ring components at the medial cortex and stabilize the ring position during its compaction. Recruits dephosphorylated myo2, but also rng2, clp1 and cdc15 to nodes and to place cytokinetic nodes around the cell equator the medial cortex to promote the ring assembly in cooperation with F-actin. Necessary to stabilize the mitotic spindle perpendicular to the axis of cell division. Also recruits the cdr2 kinase to the CR. Functionally, in the nucleus, binds to the promoter regions of M-G1 transcribed genes to negatively regulate their expression. The sequence is that of Anillin-related medial ring protein mid1 from Schizosaccharomyces pombe (strain 972 / ATCC 24843) (Fission yeast).